The following is a 375-amino-acid chain: 23S rRNA (uracil(747)-C(5))-methyltransferase RlmC (375 aa).

The [4Fe-4S] cluster site is built by Cys3, Cys11, Cys14, and Cys87. Residues Gln212, Phe241, Glu262, and Asn307 each coordinate S-adenosyl-L-methionine. Cys334 (nucleophile) is an active-site residue.

This sequence belongs to the class I-like SAM-binding methyltransferase superfamily. RNA M5U methyltransferase family. RlmC subfamily.

It catalyses the reaction uridine(747) in 23S rRNA + S-adenosyl-L-methionine = 5-methyluridine(747) in 23S rRNA + S-adenosyl-L-homocysteine + H(+). Functionally, catalyzes the formation of 5-methyl-uridine at position 747 (m5U747) in 23S rRNA. This is 23S rRNA (uracil(747)-C(5))-methyltransferase RlmC from Cronobacter sakazakii (strain ATCC BAA-894) (Enterobacter sakazakii).